The primary structure comprises 430 residues: Dihydrolipoyllysine-residue acetyltransferase component of pyruvate dehydrogenase complex (430 aa).

The Lipoyl-binding domain occupies 2–77 (AFEFRLPDIG…VVGDVIVKID (76 aa)). Position 43 is an N6-lipoyllysine (Lys43). A disordered region spans residues 80 to 122 (DAEDMQFKGHDDDSSSKEEPAKEEAPAEQAPVATQTEEVDENR). Residues 84–104 (MQFKGHDDDSSSKEEPAKEEA) show a composition bias toward basic and acidic residues. Positions 125–162 (KAMPSVRKYAREKGVNIKAVSGSGKNGRITKEDVDAYL) constitute a Peripheral subunit-binding (PSBD) domain. The segment at 164–200 (GGAPTASNESADSATNEEVAETPAAPAAVSLEGDFPE) is disordered. The segment covering 177–192 (ATNEEVAETPAAPAAV) has biased composition (low complexity). Residue His401 is part of the active site.

It belongs to the 2-oxoacid dehydrogenase family. In terms of assembly, forms a 24-polypeptide structural core with octahedral symmetry. (R)-lipoate is required as a cofactor.

It carries out the reaction N(6)-[(R)-dihydrolipoyl]-L-lysyl-[protein] + acetyl-CoA = N(6)-[(R)-S(8)-acetyldihydrolipoyl]-L-lysyl-[protein] + CoA. Functionally, the pyruvate dehydrogenase complex catalyzes the overall conversion of pyruvate to acetyl-CoA and CO(2). It contains multiple copies of three enzymatic components: pyruvate dehydrogenase (E1), dihydrolipoamide acetyltransferase (E2) and lipoamide dehydrogenase (E3). The sequence is that of Dihydrolipoyllysine-residue acetyltransferase component of pyruvate dehydrogenase complex (pdhC) from Staphylococcus aureus.